The primary structure comprises 180 residues: MFEATTILGYRGEMGGKKFALIGGDGQVTLGNCVVKANATKIRSLYHNQVLSGFAGSTADAFSLFDMFERILESKKGDLFKSVVDFSKEWRKDKYLRRLEAMMIVLNLDHIFILSGTGDVLEAEDNKIAAIGSGGNYALSAARALDHFAHLEPRKLVEESLKIAGDLCIYTNTNIKILEL.

The active site involves Thr-5. Residues Gly-165, Cys-168, and Thr-171 each coordinate Na(+).

The protein belongs to the peptidase T1B family. HslV subfamily. As to quaternary structure, a double ring-shaped homohexamer of HslV is capped on each side by a ring-shaped HslU homohexamer. The assembly of the HslU/HslV complex is dependent on binding of ATP.

The protein localises to the cytoplasm. The enzyme catalyses ATP-dependent cleavage of peptide bonds with broad specificity.. Its activity is regulated as follows. Allosterically activated by HslU binding. Protease subunit of a proteasome-like degradation complex believed to be a general protein degrading machinery. The chain is ATP-dependent protease subunit HslV from Helicobacter pylori (strain HPAG1).